The primary structure comprises 154 residues: Prefoldin subunit 2 (154 aa).

Disordered regions lie at residues 1–20 (MADSSGRVGKSGGSGTGKGA) and 126–154 (LMGEDEKPAAKENSEGAGAKSSSAGVLVS). The segment covering 9 to 18 (GKSGGSGTGK) has biased composition (gly residues). Positions 126-139 (LMGEDEKPAAKENS) are enriched in basic and acidic residues. Residues 141–154 (GAGAKSSSAGVLVS) show a composition bias toward low complexity.

It belongs to the prefoldin subunit beta family. As to quaternary structure, heterohexamer of two PFD-alpha type and four PFD-beta type subunits. Component of the PAQosome complex which is responsible for the biogenesis of several protein complexes and which consists of R2TP complex members RUVBL1, RUVBL2, RPAP3 and PIH1D1, URI complex members PFDN2, PFDN6, PDRG1, UXT and URI1 as well as ASDURF, POLR2E and DNAAF10/WDR92. Interacts with URI1; the interaction is phosphorylation-dependent and occurs in a growth-dependent manner.

The protein localises to the nucleus. It is found in the cytoplasm. The protein resides in the mitochondrion. Its function is as follows. Binds specifically to cytosolic chaperonin (c-CPN) and transfers target proteins to it. Binds to nascent polypeptide chain and promotes folding in an environment in which there are many competing pathways for nonnative proteins. In Rattus norvegicus (Rat), this protein is Prefoldin subunit 2 (Pfdn2).